Here is a 212-residue protein sequence, read N- to C-terminus: Ribonuclease HII (212 aa).

The RNase H type-2 domain occupies 1–205 (MTICGVDEAG…VQDILDRASQ (205 aa)). Residues D7, E8, and D100 each coordinate a divalent metal cation.

The protein belongs to the RNase HII family. Mn(2+) serves as cofactor. Mg(2+) is required as a cofactor.

The protein resides in the cytoplasm. It catalyses the reaction Endonucleolytic cleavage to 5'-phosphomonoester.. Functionally, endonuclease that specifically degrades the RNA of RNA-DNA hybrids. The sequence is that of Ribonuclease HII from Methanocorpusculum labreanum (strain ATCC 43576 / DSM 4855 / Z).